The sequence spans 729 residues: Neurochondrin (729 aa).

An N-acetylserine modification is found at Ser2. Ser2 is modified (phosphoserine). 2 S-palmitoyl cysteine lipidation sites follow: Cys3 and Cys4. The residue at position 75 (Arg75) is an Asymmetric dimethylarginine. Ser448 bears the Phosphoserine mark.

The protein belongs to the neurochondrin family. As to quaternary structure, interacts with MCHR1. Interacts with SEMA4C. Interacts with DIAPH1 (via FH3 domain). Interacts with GRM5. In terms of processing, palmitoylated. Palmitoylation by ZDHHC1, ZDHHC3 and ZDHHC11 regulates the association of NCDN with endosome membranes. May also be palmitoylated by ZDHHC7. Expressed in the neuronal, chondral and bone tissues. Expressed in dendrites. Enriched in the brain in the surface layer I-IV. In brains, protein level increases in male but decreases in female with advancing age (at protein level). In adult brains, it is highly expressed in the forebrain and hindbrain. Highly expressed in the hippocampus, piriform cortex, septum, amygdaloid complex, medial geniculate nucleus, inferior colliculus, cerebellar nuclei and the nuclei of the Vth, VIIth, and XIIth cranial nerves. In bone tissues, it is expressed in osteoblasts and osteocytes.

It is found in the cytoplasm. Its subcellular location is the cytosol. The protein localises to the endosome membrane. It localises to the cell projection. The protein resides in the dendrite. It is found in the postsynapse. Probably involved in signal transduction, in the nervous system, via increasing cell surface localization of GRM5 and positively regulating its signaling. Required for the spatial learning process. Acts as a negative regulator of Ca(2+)-calmodulin-dependent protein kinase 2 (CaMK2) phosphorylation. May play a role in modulating melanin-concentrating hormone-mediated functions via its interaction with MCHR1 that interferes with G protein-coupled signal transduction. May be involved in bone metabolism. May also be involved in neurite outgrowth. This is Neurochondrin (Ncdn) from Mus musculus (Mouse).